Here is a 411-residue protein sequence, read N- to C-terminus: Serine hydroxymethyltransferase (411 aa).

Residues leucine 119 and 123-125 (GHL) each bind (6S)-5,6,7,8-tetrahydrofolate. At lysine 228 the chain carries N6-(pyridoxal phosphate)lysine.

It belongs to the SHMT family. Homodimer. It depends on pyridoxal 5'-phosphate as a cofactor.

The protein localises to the cytoplasm. The enzyme catalyses (6R)-5,10-methylene-5,6,7,8-tetrahydrofolate + glycine + H2O = (6S)-5,6,7,8-tetrahydrofolate + L-serine. It participates in one-carbon metabolism; tetrahydrofolate interconversion. Its pathway is amino-acid biosynthesis; glycine biosynthesis; glycine from L-serine: step 1/1. Catalyzes the reversible interconversion of serine and glycine with tetrahydrofolate (THF) serving as the one-carbon carrier. This reaction serves as the major source of one-carbon groups required for the biosynthesis of purines, thymidylate, methionine, and other important biomolecules. Also exhibits THF-independent aldolase activity toward beta-hydroxyamino acids, producing glycine and aldehydes, via a retro-aldol mechanism. In Clostridium kluyveri (strain NBRC 12016), this protein is Serine hydroxymethyltransferase.